The chain runs to 207 residues: Octanoyltransferase (207 aa).

In terms of domain architecture, BPL/LPL catalytic spans 27 to 203; the sequence is ADTEDELWVV…HLETQFTPKA (177 aa). Residues 66 to 73, 133 to 135, and 146 to 148 each bind substrate; these read RGGQITYH, SLG, and GLA. Cys164 serves as the catalytic Acyl-thioester intermediate.

This sequence belongs to the LipB family.

Its subcellular location is the cytoplasm. The catalysed reaction is octanoyl-[ACP] + L-lysyl-[protein] = N(6)-octanoyl-L-lysyl-[protein] + holo-[ACP] + H(+). The protein operates within protein modification; protein lipoylation via endogenous pathway; protein N(6)-(lipoyl)lysine from octanoyl-[acyl-carrier-protein]: step 1/2. In terms of biological role, catalyzes the transfer of endogenously produced octanoic acid from octanoyl-acyl-carrier-protein onto the lipoyl domains of lipoate-dependent enzymes. Lipoyl-ACP can also act as a substrate although octanoyl-ACP is likely to be the physiological substrate. The chain is Octanoyltransferase from Neisseria meningitidis serogroup B (strain ATCC BAA-335 / MC58).